We begin with the raw amino-acid sequence, 159 residues long: Putative transcriptional regulatory protein rrnAC0199 (159 aa).

The protein belongs to the Tfx family.

Functionally, putative transcriptional regulator. The polypeptide is Putative transcriptional regulatory protein rrnAC0199 (Haloarcula marismortui (strain ATCC 43049 / DSM 3752 / JCM 8966 / VKM B-1809) (Halobacterium marismortui)).